The primary structure comprises 148 residues: Suppressor APC domain-containing protein 1 (148 aa).

Residues 120–148 are disordered; that stretch reads SRQQKGVTQPKEEMAQRGCTKGPRGPTRV.

The chain is Suppressor APC domain-containing protein 1 (SAPCD1) from Homo sapiens (Human).